A 209-amino-acid chain; its full sequence is Pyridoxal phosphate homeostasis protein (209 aa).

Position 31 is an N6-(pyridoxal phosphate)lysine (Lys-31).

This sequence belongs to the pyridoxal phosphate-binding protein YggS/PROSC family.

Functionally, pyridoxal 5'-phosphate (PLP)-binding protein, which is involved in PLP homeostasis. This Deinococcus radiodurans (strain ATCC 13939 / DSM 20539 / JCM 16871 / CCUG 27074 / LMG 4051 / NBRC 15346 / NCIMB 9279 / VKM B-1422 / R1) protein is Pyridoxal phosphate homeostasis protein.